Reading from the N-terminus, the 351-residue chain is D-alanine--D-alanine ligase (351 aa).

In terms of domain architecture, ATP-grasp spans 135-343 (NQIFLQSGQK…MEEVFSDLIE (209 aa)). 167–222 (LETLGFPQFLKPVEGGSSVSVYKITNREQLKEKLALIFESDSKVMSQSFLTGIEVS) lines the ATP pocket. 3 residues coordinate Mg(2+): Asp-298, Glu-310, and Asn-312.

The protein belongs to the D-alanine--D-alanine ligase family. The cofactor is Mg(2+). Mn(2+) serves as cofactor.

The protein resides in the cytoplasm. It catalyses the reaction 2 D-alanine + ATP = D-alanyl-D-alanine + ADP + phosphate + H(+). The protein operates within cell wall biogenesis; peptidoglycan biosynthesis. Its function is as follows. Cell wall formation. The polypeptide is D-alanine--D-alanine ligase (Leptospira interrogans serogroup Icterohaemorrhagiae serovar copenhageni (strain Fiocruz L1-130)).